The following is a 21-amino-acid chain: Outer membrane protein P2 (21 aa).

As to quaternary structure, disulfide bond interactions within and between MOMP molecules and other components form high molecular-weight oligomers.

It localises to the cell outer membrane. Functionally, structural rigidity of the outer membrane of elementary bodies and porin forming, permitting diffusion of solutes through the intracellular reticulate body membrane. Binds carcinoembryonic antigen (CEA). The polypeptide is Outer membrane protein P2 (Glaesserella parasuis (Haemophilus parasuis)).